The following is a 313-amino-acid chain: UPF0761 membrane protein VS_0126 (313 aa).

A run of 6 helical transmembrane segments spans residues 41–61, 104–124, 139–159, 185–205, 217–237, and 249–269; these read YLAY…LSIL, MTAV…SNID, AVLS…LIGA, VIRK…YLLV, AGSL…AAYI, and ALAA…IVLV. Over residues 281 to 290 the composition is skewed to polar residues; that stretch reads EQWSDSQEMV. The segment at 281 to 313 is disordered; it reads EQWSDSQEMVHSSDKDKITEQGNNSDSTDPESK.

This sequence belongs to the UPF0761 family.

The protein resides in the cell inner membrane. The protein is UPF0761 membrane protein VS_0126 of Vibrio atlanticus (strain LGP32) (Vibrio splendidus (strain Mel32)).